A 157-amino-acid chain; its full sequence is V-type proton ATPase 16 kDa proteolipid subunit c (157 aa).

Residues 1–10 are Lumenal-facing; sequence MALPEENPVY. A helical membrane pass occupies residues 11–33; the sequence is GPFFGVMGAAAAIIFSALGAAYG. The Cytoplasmic segment spans residues 34–55; it reads TAKSGTGIAAMSVMRPELIMKS. A helical membrane pass occupies residues 56 to 76; the sequence is IIPVVMAGIIAIYGLVVAVLI. Residues 77–94 lie on the Lumenal side of the membrane; the sequence is AGSLDTPTKYSLYKGFIH. A helical transmembrane segment spans residues 95–116; it reads LGAGLAVGFSGLAAGFAIGIVG. The Cytoplasmic portion of the chain corresponds to 117–128; that stretch reads DAGVRGTAQQPR. The helical transmembrane segment at 129-154 threads the bilayer; the sequence is LFVGMILILIFAEVLGLYGLIVAIYL. The Lumenal portion of the chain corresponds to 155-157; sequence YTK.

The protein belongs to the V-ATPase proteolipid subunit family. As to quaternary structure, V-ATPase is a heteromultimeric enzyme made up of two complexes: the ATP-hydrolytic V1 complex and the proton translocation V0 complex. The V1 complex consists of three catalytic AB heterodimers that form a heterohexamer, three peripheral stalks each consisting of EG heterodimers, one central rotor including subunits D and F, and the regulatory subunits C and H. The proton translocation complex V0 consists of the proton transport subunit a, a ring of proteolipid subunits c9c'', rotary subunit d, subunits e and f, and the accessory subunits VhaAC45 and ATP6AP2.

The protein resides in the membrane. Functionally, proton-conducting pore forming subunit of the V0 complex of vacuolar(H+)-ATPase (V-ATPase), a multisubunit enzyme composed of a peripheral complex (V1) that hydrolyzes ATP and a membrane integral complex (V0) that translocates protons. V-ATPase is responsible for acidifying and maintaining the pH of intracellular compartments and in some cell types, is targeted to the plasma membrane, where it is responsible for acidifying the extracellular environment. The protein is V-type proton ATPase 16 kDa proteolipid subunit c of Aedes aegypti (Yellowfever mosquito).